Consider the following 371-residue polypeptide: 4-hydroxybenzoate polyprenyltransferase, mitochondrial (371 aa).

Residues 1–45 (MLGSCGAGLVRGLRAETQAWLWGTRGRSLALVHAARGLHAANWQP) constitute a mitochondrion transit peptide. At 46 to 83 (SPGQGPRGRPLSLSAAAVVNSAPRPLQPYLRLMRLDKP) the chain is on the mitochondrial matrix side. Residues 84–104 (IGTWLLYLPCTWSIGLAADPG) traverse the membrane as a helical segment. Residues 105 to 108 (CLPD) lie on the Mitochondrial intermembrane side of the membrane. The helical transmembrane segment at 109-129 (WYMLSLFGTGAVLMRGAGCTI) threads the bilayer. Residues 130–171 (NDMWDRDYDKKVTRTASRPIAAGDISTFRSFVFLGGQLTLAL) are Mitochondrial matrix-facing. A helical transmembrane segment spans residues 172 to 192 (GVLLCLNYYSIALGAASLLLV). At 193–200 (TTYPLMKR) the chain is on the mitochondrial intermembrane side. Residues 201 to 221 (ITYWPQLALGLTFNWGALLGW) traverse the membrane as a helical segment. Over 222–231 (SAVKGSCDPS) the chain is Mitochondrial matrix. The chain crosses the membrane as a helical span at residues 232–252 (VCLPLYFSGIMWTLIYDTIYA). The Mitochondrial intermembrane segment spans residues 253–277 (HQDKKDDALIGLKSTALLFREDTKK). Residues 278 to 298 (WLSGFSVAMLGALSLVGVNSG) traverse the membrane as a helical segment. Residues 299–300 (QT) are Mitochondrial matrix-facing. The chain crosses the membrane as a helical span at residues 301-321 (MPYYTALAAVGAHLAHQIYTL). The Mitochondrial intermembrane segment spans residues 322–332 (DINRPEDCWEK). Residues 333 to 353 (FTSNRTIGLIIFLGIVLGNLC) traverse the membrane as a helical segment. Residues 354-371 (KAKETDKTRKNIENRMEN) are Mitochondrial matrix-facing.

It belongs to the UbiA prenyltransferase family. Mg(2+) serves as cofactor.

Its subcellular location is the mitochondrion inner membrane. It carries out the reaction an all-trans-polyprenyl diphosphate + 4-hydroxybenzoate = a 4-hydroxy-3-(all-trans-polyprenyl)benzoate + diphosphate. The catalysed reaction is all-trans-decaprenyl diphosphate + 4-hydroxybenzoate = 4-hydroxy-3-(all-trans-decaprenyl)benzoate + diphosphate. It catalyses the reaction all-trans-nonaprenyl diphosphate + 4-hydroxybenzoate = 4-hydroxy-3-(all-trans-nonaprenyl)benzoate + diphosphate. It participates in cofactor biosynthesis; ubiquinone biosynthesis. Its function is as follows. Mediates the second step in the final reaction sequence of coenzyme Q (CoQ) biosynthesis. Catalyzes the prenylation of para-hydroxybenzoate (PHB) with an all-trans polyprenyl donor (such as all-trans-decaprenyl diphosphate). The length of the polyprenyl side chain varies depending on the species, in humans, the side chain is comprised of 10 isoprenyls (decaprenyl) producing CoQ10 (also known as ubiquinone), whereas rodents predominantly generate CoQ9. However, this specificity is not complete, human tissues have low amounts of CoQ9 and rodent organs contain some CoQ10. Plays a central role in the biosynthesis of CoQ10. CoQ10 is a vital molecule that transports electrons from mitochondrial respiratory chain complexes. CoQs also function as cofactors for uncoupling protein and play a role as regulators of the extracellularly-induced ceramide-dependent apoptotic pathway. Regulates mitochondrial permeability transition pore (mPTP) opening and ROS production (pivotal events in cell death) in a tissue specific manner. The chain is 4-hydroxybenzoate polyprenyltransferase, mitochondrial from Bos taurus (Bovine).